We begin with the raw amino-acid sequence, 1187 residues long: Serine/threonine-protein kinase SIK3 homolog (1187 aa).

Residues 1-15 (MAAVSSGAAAAAGIP) are compositionally biased toward low complexity. A disordered region spans residues 1–41 (MAAVSSGAAAAAGIPNPNPNRERPQQQQQQQPASAALHPVA). A Protein kinase domain is found at 59 to 310 (YEMERTIGKG…MEQICKNKWM (252 aa)). ATP is bound by residues 65–73 (IGKGNFAVV) and K88. The Proton acceptor role is filled by D181. T214 carries the phosphothreonine modification. Position 218 is a phosphoserine (S218). One can recognise a UBA domain in the interval 337-377 (LINEQVLMAMAEMGFDRERTLQSLHADSYDHYSATYSLLSD). Disordered stretches follow at residues 548-587 (LKRP…VQRS), 697-776 (IQPS…PPGS), and 1060-1092 (CADA…GALQ). Positions 570 to 581 (VDEEGSDAEPDP) are enriched in acidic residues. A compositionally biased stretch (polar residues) spans 739-749 (VQYQHGSALYQ).

The protein belongs to the protein kinase superfamily. CAMK Ser/Thr protein kinase family. SNF1 subfamily. The cofactor is Mg(2+).

The catalysed reaction is L-seryl-[protein] + ATP = O-phospho-L-seryl-[protein] + ADP + H(+). It catalyses the reaction L-threonyl-[protein] + ATP = O-phospho-L-threonyl-[protein] + ADP + H(+). This is Serine/threonine-protein kinase SIK3 homolog from Danio rerio (Zebrafish).